The primary structure comprises 562 residues: 63 kDa globulin-like protein (562 aa).

The first 23 residues, 1 to 23, serve as a signal peptide directing secretion; the sequence is MATRARATILLLLAAVLFAAAAA. The span at 63 to 88 shows a compositional bias: basic and acidic residues; the sequence is QQQQERRREHGGHDDDRRDRDRRGEG. The disordered stretch occupies residues 63-103; the sequence is QQQQERRREHGGHDDDRRDRDRRGEGSSEEEDEGRERGSRR. 2 consecutive Cupin type-1 domains span residues 106 to 264 and 312 to 507; these read YVFG…EKLE and FNIL…REVD. Residue asparagine 350 is glycosylated (N-linked (GlcNAc...) asparagine). Disordered stretches follow at residues 383-430 and 516-550; these read PHLS…QVGQ and SAFL…GDEA. Residues 390–408 are compositionally biased toward basic and acidic residues; it reads RGGESEERRRERGKGKWRE. A compositionally biased stretch (acidic residues) spans 409-427; the sequence is EEEEEEEQQKGQEEEEEEQ.

The protein belongs to the 7S seed storage protein family.

It localises to the secreted. Its function is as follows. Seed storage protein. This is 63 kDa globulin-like protein from Oryza sativa subsp. japonica (Rice).